Consider the following 170-residue polypeptide: 2S seed storage protein 2 (170 aa).

A signal peptide spans methionine 1–alanine 21. 2 consecutive propeptides follow at residues serine 22–asparagine 37 and glycine 73–asparagine 88.

Belongs to the 2S seed storage albumins family. In terms of assembly, the mature protein consists of a small and a large chain linked by disulfide bonds.

Functionally, this is a 2S seed storage protein. This Arabidopsis thaliana (Mouse-ear cress) protein is 2S seed storage protein 2 (AT2S2).